A 289-amino-acid polypeptide reads, in one-letter code: Ubiquinone biosynthesis O-methyltransferase (289 aa).

Arginine 36 provides a ligand contact to S-adenosyl-L-methionine. The RPE1 insert domain maps to 50–98 (RHLSKLTYREELVGNMQHSTAAYALVREDASSRLTHKLPLEAEFEKMSN). S-adenosyl-L-methionine-binding residues include glycine 109, aspartate 130, and leucine 172.

Belongs to the methyltransferase superfamily. UbiG/COQ3 family.

It catalyses the reaction a 3-demethylubiquinol + S-adenosyl-L-methionine = a ubiquinol + S-adenosyl-L-homocysteine + H(+). The catalysed reaction is a 3-(all-trans-polyprenyl)benzene-1,2-diol + S-adenosyl-L-methionine = a 2-methoxy-6-(all-trans-polyprenyl)phenol + S-adenosyl-L-homocysteine + H(+). It functions in the pathway cofactor biosynthesis; ubiquinone biosynthesis. O-methyltransferase that catalyzes the 2 O-methylation steps in the ubiquinone biosynthetic pathway. The protein is Ubiquinone biosynthesis O-methyltransferase of Rickettsia conorii (strain ATCC VR-613 / Malish 7).